Consider the following 273-residue polypeptide: Thymidylate synthase (273 aa).

Arginine 31 serves as a coordination point for dUMP. A (6R)-5,10-methylene-5,6,7,8-tetrahydrofolate-binding site is contributed by histidine 61. 136-137 (RR) is a binding site for dUMP. Cysteine 156 acts as the Nucleophile in catalysis. DUMP contacts are provided by residues 176–179 (RSAD), asparagine 187, and 217–219 (HIY). Aspartate 179 provides a ligand contact to (6R)-5,10-methylene-5,6,7,8-tetrahydrofolate. Alanine 272 is a (6R)-5,10-methylene-5,6,7,8-tetrahydrofolate binding site.

Belongs to the thymidylate synthase family. Bacterial-type ThyA subfamily. In terms of assembly, homodimer.

It localises to the cytoplasm. It carries out the reaction dUMP + (6R)-5,10-methylene-5,6,7,8-tetrahydrofolate = 7,8-dihydrofolate + dTMP. The protein operates within pyrimidine metabolism; dTTP biosynthesis. In terms of biological role, catalyzes the reductive methylation of 2'-deoxyuridine-5'-monophosphate (dUMP) to 2'-deoxythymidine-5'-monophosphate (dTMP) while utilizing 5,10-methylenetetrahydrofolate (mTHF) as the methyl donor and reductant in the reaction, yielding dihydrofolate (DHF) as a by-product. This enzymatic reaction provides an intracellular de novo source of dTMP, an essential precursor for DNA biosynthesis. In Corynebacterium jeikeium (strain K411), this protein is Thymidylate synthase.